Consider the following 458-residue polypeptide: ATP synthase subunit beta (458 aa).

148–155 (GGAGVGKT) lines the ATP pocket.

It belongs to the ATPase alpha/beta chains family. As to quaternary structure, F-type ATPases have 2 components, CF(1) - the catalytic core - and CF(0) - the membrane proton channel. CF(1) has five subunits: alpha(3), beta(3), gamma(1), delta(1), epsilon(1). CF(0) has three main subunits: a(1), b(2) and c(9-12). The alpha and beta chains form an alternating ring which encloses part of the gamma chain. CF(1) is attached to CF(0) by a central stalk formed by the gamma and epsilon chains, while a peripheral stalk is formed by the delta and b chains.

Its subcellular location is the cell inner membrane. It catalyses the reaction ATP + H2O + 4 H(+)(in) = ADP + phosphate + 5 H(+)(out). Functionally, produces ATP from ADP in the presence of a proton gradient across the membrane. The catalytic sites are hosted primarily by the beta subunits. This Shewanella piezotolerans (strain WP3 / JCM 13877) protein is ATP synthase subunit beta.